The chain runs to 45 residues: DNA-directed RNA polymerase subunit Rpo12 (45 aa).

Zn(2+)-binding residues include cysteine 8, cysteine 23, and cysteine 26.

Belongs to the archaeal Rpo12/eukaryotic RPC10 RNA polymerase subunit family. As to quaternary structure, part of the RNA polymerase complex. It depends on Zn(2+) as a cofactor.

It localises to the cytoplasm. It carries out the reaction RNA(n) + a ribonucleoside 5'-triphosphate = RNA(n+1) + diphosphate. Functionally, DNA-dependent RNA polymerase (RNAP) catalyzes the transcription of DNA into RNA using the four ribonucleoside triphosphates as substrates. The protein is DNA-directed RNA polymerase subunit Rpo12 of Methanothrix thermoacetophila (strain DSM 6194 / JCM 14653 / NBRC 101360 / PT) (Methanosaeta thermophila).